The sequence spans 152 residues: Transcriptional repressor NrdR (152 aa).

A zinc finger spans residues 3 to 34 (CPACQHNGTRVLDSRPVDEGRSIRRRRECESC). Residues 49-139 (LIVVKKEGIR…VYRQFKDINV (91 aa)) enclose the ATP-cone domain.

This sequence belongs to the NrdR family. It depends on Zn(2+) as a cofactor.

Functionally, negatively regulates transcription of bacterial ribonucleotide reductase nrd genes and operons by binding to NrdR-boxes. The protein is Transcriptional repressor NrdR of Bacillus licheniformis (strain ATCC 14580 / DSM 13 / JCM 2505 / CCUG 7422 / NBRC 12200 / NCIMB 9375 / NCTC 10341 / NRRL NRS-1264 / Gibson 46).